The sequence spans 471 residues: MKIKTRFAPSPTGYLHVGGARTALYSWLFARNHGGEFVLRIEDTDLERSTPEAIEAIMDGMNWLNLEWDEGPYFQTKRFDRYNAVIDDMIVAGTAYKCYCSKERLDALREEQMANGDKPRYDGRCRHSHEHHADDEPCVVRFANPQDGSVIFDDQIRGPIEFSNQELDDLIIRRTDGSPTYNFCVVVDDWDMEISHVIRGEDHINNTPRQINILKALNAPVPVYAHVSMINGDDGKKLSKRHGAVSVMQYRDDGYLPEALLNYLVRLGWSSGDQEIFSREEMIKLFSLGAVSKSASAFNTDKLLWLNHHYINTMQPEYVATYLQWHIEQANIDTRTGPELAELVKLLGERCKTLKEIAESCRYFYEEFDAFDADAAKKHLRPVARQPLEVVRDKLAAITAWTAENVHHAIQATADELEVGMGKVGMPLRVAVTGAGQSPGLDVTVHAIGKTRSVARINKALGFIAERESQQ.

The 'HIGH' region signature appears at 9 to 19; that stretch reads PSPTGYLHVGG. Residues C98, C100, C125, and H127 each contribute to the Zn(2+) site. A 'KMSKS' region motif is present at residues 237–241; that stretch reads KLSKR. An ATP-binding site is contributed by K240.

This sequence belongs to the class-I aminoacyl-tRNA synthetase family. Glutamate--tRNA ligase type 1 subfamily. In terms of assembly, monomer. Zn(2+) is required as a cofactor.

The protein localises to the cytoplasm. It catalyses the reaction tRNA(Glu) + L-glutamate + ATP = L-glutamyl-tRNA(Glu) + AMP + diphosphate. Functionally, catalyzes the attachment of glutamate to tRNA(Glu) in a two-step reaction: glutamate is first activated by ATP to form Glu-AMP and then transferred to the acceptor end of tRNA(Glu). The polypeptide is Glutamate--tRNA ligase (Enterobacter sp. (strain 638)).